The chain runs to 131 residues: MLFFKSIASLAALVSLAVASPIESRQSATTCGSTNYSASQVRAAANAACQYYQNDDTAGSSTYPHTYNNYEGFDFPVDGPYQEFPIKSGGVYTGGSPGADRVVINTNCEYAGAITHTGASGNNFVGCSGTN.

Positions 1–25 (MLFFKSIASLAALVSLAVASPIESR) are cleaved as a signal peptide. A Pyrrolidone carboxylic acid modification is found at Gln-26. 2 disulfides stabilise this stretch: Cys-31–Cys-127 and Cys-49–Cys-108. The active site involves His-65. Glu-83 functions as the Proton acceptor in the catalytic mechanism. Residue His-116 is the Proton donor of the active site.

Belongs to the ribonuclease N1/T1 family.

The catalysed reaction is [RNA] containing guanosine + H2O = an [RNA fragment]-3'-guanosine-3'-phosphate + a 5'-hydroxy-ribonucleotide-3'-[RNA fragment].. The polypeptide is Guanyl-specific ribonuclease F1 (Fusarium fujikuroi (Bakanae and foot rot disease fungus)).